Consider the following 346-residue polypeptide: 4-hydroxy-3-methylbut-2-enyl diphosphate reductase (346 aa).

Cysteine 19 provides a ligand contact to [4Fe-4S] cluster. Residues histidine 48 and histidine 84 each coordinate (2E)-4-hydroxy-3-methylbut-2-enyl diphosphate. 2 residues coordinate dimethylallyl diphosphate: histidine 48 and histidine 84. Residues histidine 48 and histidine 84 each contribute to the isopentenyl diphosphate site. Residue cysteine 106 participates in [4Fe-4S] cluster binding. Histidine 134 serves as a coordination point for (2E)-4-hydroxy-3-methylbut-2-enyl diphosphate. Residue histidine 134 coordinates dimethylallyl diphosphate. Histidine 134 is a binding site for isopentenyl diphosphate. The Proton donor role is filled by glutamate 136. A (2E)-4-hydroxy-3-methylbut-2-enyl diphosphate-binding site is contributed by threonine 175. Cysteine 205 provides a ligand contact to [4Fe-4S] cluster. Residues serine 233, serine 234, asparagine 235, and serine 278 each coordinate (2E)-4-hydroxy-3-methylbut-2-enyl diphosphate. Dimethylallyl diphosphate is bound by residues serine 233, serine 234, asparagine 235, and serine 278. Isopentenyl diphosphate-binding residues include serine 233, serine 234, asparagine 235, and serine 278.

It belongs to the IspH family. [4Fe-4S] cluster is required as a cofactor.

It catalyses the reaction isopentenyl diphosphate + 2 oxidized [2Fe-2S]-[ferredoxin] + H2O = (2E)-4-hydroxy-3-methylbut-2-enyl diphosphate + 2 reduced [2Fe-2S]-[ferredoxin] + 2 H(+). The catalysed reaction is dimethylallyl diphosphate + 2 oxidized [2Fe-2S]-[ferredoxin] + H2O = (2E)-4-hydroxy-3-methylbut-2-enyl diphosphate + 2 reduced [2Fe-2S]-[ferredoxin] + 2 H(+). Its pathway is isoprenoid biosynthesis; dimethylallyl diphosphate biosynthesis; dimethylallyl diphosphate from (2E)-4-hydroxy-3-methylbutenyl diphosphate: step 1/1. The protein operates within isoprenoid biosynthesis; isopentenyl diphosphate biosynthesis via DXP pathway; isopentenyl diphosphate from 1-deoxy-D-xylulose 5-phosphate: step 6/6. Catalyzes the conversion of 1-hydroxy-2-methyl-2-(E)-butenyl 4-diphosphate (HMBPP) into a mixture of isopentenyl diphosphate (IPP) and dimethylallyl diphosphate (DMAPP). Acts in the terminal step of the DOXP/MEP pathway for isoprenoid precursor biosynthesis. This is 4-hydroxy-3-methylbut-2-enyl diphosphate reductase from Brucella melitensis biotype 1 (strain ATCC 23456 / CCUG 17765 / NCTC 10094 / 16M).